A 433-amino-acid polypeptide reads, in one-letter code: Glutamyl-tRNA reductase (433 aa).

Substrate is bound by residues 49–52 (TCNR), Ser-109, 114–116 (EGQ), and Gln-120. Cys-50 acts as the Nucleophile in catalysis. 189 to 194 (GAGKMS) is an NADP(+) binding site.

This sequence belongs to the glutamyl-tRNA reductase family. Homodimer.

The enzyme catalyses (S)-4-amino-5-oxopentanoate + tRNA(Glu) + NADP(+) = L-glutamyl-tRNA(Glu) + NADPH + H(+). It participates in porphyrin-containing compound metabolism; protoporphyrin-IX biosynthesis; 5-aminolevulinate from L-glutamyl-tRNA(Glu): step 1/2. Its pathway is porphyrin-containing compound metabolism; chlorophyll biosynthesis. Functionally, catalyzes the NADPH-dependent reduction of glutamyl-tRNA(Glu) to glutamate 1-semialdehyde (GSA). The chain is Glutamyl-tRNA reductase from Acaryochloris marina (strain MBIC 11017).